A 212-amino-acid chain; its full sequence is MFTSYGYSTMIKVFLLCLAISAAALIFPLWAQIPIHLTTGLALLFTLYFFRDPKRVAPDEKRIILAPADGKILLVQKQNGNIAGKTSTLVSIFMSPLNVHVNRVPLSGKVTRLHYRPGQFLMAFDNRSMESNEKMEIGINNGEIEVQFSQVSGFLARRIVCQLQKGENVKLGNRFGMIKFGSRVDLILPPSATVLLQPGQRTRAGETILARY.

The Schiff-base intermediate with substrate; via pyruvic acid role is filled by S182. S182 is subject to Pyruvic acid (Ser); by autocatalysis.

It belongs to the phosphatidylserine decarboxylase family. PSD-A subfamily. In terms of assembly, heterodimer of a large membrane-associated beta subunit and a small pyruvoyl-containing alpha subunit. Requires pyruvate as cofactor. Post-translationally, is synthesized initially as an inactive proenzyme. Formation of the active enzyme involves a self-maturation process in which the active site pyruvoyl group is generated from an internal serine residue via an autocatalytic post-translational modification. Two non-identical subunits are generated from the proenzyme in this reaction, and the pyruvate is formed at the N-terminus of the alpha chain, which is derived from the carboxyl end of the proenzyme. The post-translation cleavage follows an unusual pathway, termed non-hydrolytic serinolysis, in which the side chain hydroxyl group of the serine supplies its oxygen atom to form the C-terminus of the beta chain, while the remainder of the serine residue undergoes an oxidative deamination to produce ammonia and the pyruvoyl prosthetic group on the alpha chain.

It is found in the cell membrane. It catalyses the reaction a 1,2-diacyl-sn-glycero-3-phospho-L-serine + H(+) = a 1,2-diacyl-sn-glycero-3-phosphoethanolamine + CO2. It participates in phospholipid metabolism; phosphatidylethanolamine biosynthesis; phosphatidylethanolamine from CDP-diacylglycerol: step 2/2. Functionally, catalyzes the formation of phosphatidylethanolamine (PtdEtn) from phosphatidylserine (PtdSer). This chain is Phosphatidylserine decarboxylase proenzyme, found in Pelodictyon phaeoclathratiforme (strain DSM 5477 / BU-1).